Reading from the N-terminus, the 160-residue chain is Major pollen allergen Bet v 1-A (160 aa).

Brassinolide contacts are provided by Lys-55, Tyr-82, Tyr-84, and Asn-101.

The protein belongs to the BetVI family.

Its subcellular location is the cytoplasm. Its function is as follows. May be a general steroid carrier protein. This chain is Major pollen allergen Bet v 1-A (BETVIA), found in Betula pendula (European white birch).